We begin with the raw amino-acid sequence, 209 residues long: ATP-dependent Clp protease proteolytic subunit (209 aa).

Residue Ser-107 is the Nucleophile of the active site. His-132 is a catalytic residue.

The protein belongs to the peptidase S14 family. As to quaternary structure, fourteen ClpP subunits assemble into 2 heptameric rings which stack back to back to give a disk-like structure with a central cavity, resembling the structure of eukaryotic proteasomes.

It localises to the cytoplasm. The enzyme catalyses Hydrolysis of proteins to small peptides in the presence of ATP and magnesium. alpha-casein is the usual test substrate. In the absence of ATP, only oligopeptides shorter than five residues are hydrolyzed (such as succinyl-Leu-Tyr-|-NHMec, and Leu-Tyr-Leu-|-Tyr-Trp, in which cleavage of the -Tyr-|-Leu- and -Tyr-|-Trp bonds also occurs).. Its function is as follows. Cleaves peptides in various proteins in a process that requires ATP hydrolysis. Has a chymotrypsin-like activity. Plays a major role in the degradation of misfolded proteins. This Ruegeria pomeroyi (strain ATCC 700808 / DSM 15171 / DSS-3) (Silicibacter pomeroyi) protein is ATP-dependent Clp protease proteolytic subunit.